The primary structure comprises 341 residues: S-adenosylmethionine:tRNA ribosyltransferase-isomerase (341 aa).

The protein belongs to the QueA family. As to quaternary structure, monomer.

Its subcellular location is the cytoplasm. The enzyme catalyses 7-aminomethyl-7-carbaguanosine(34) in tRNA + S-adenosyl-L-methionine = epoxyqueuosine(34) in tRNA + adenine + L-methionine + 2 H(+). It participates in tRNA modification; tRNA-queuosine biosynthesis. Functionally, transfers and isomerizes the ribose moiety from AdoMet to the 7-aminomethyl group of 7-deazaguanine (preQ1-tRNA) to give epoxyqueuosine (oQ-tRNA). This is S-adenosylmethionine:tRNA ribosyltransferase-isomerase from Pelotomaculum thermopropionicum (strain DSM 13744 / JCM 10971 / SI).